Here is a 627-residue protein sequence, read N- to C-terminus: Hemocyanin D chain (627 aa).

Residues His-171, His-175, His-202, His-322, His-326, and His-362 each coordinate Cu cation. The N-linked (GlcNAc...) asparagine glycan is linked to Asn-445. A disulfide bridge connects residues Cys-531 and Cys-579.

Belongs to the tyrosinase family. Hemocyanin subfamily. Tarantula hemocyanin is a 24-chain polymer with seven different chains identified. In terms of tissue distribution, hemolymph.

It is found in the secreted. Its subcellular location is the extracellular space. Functionally, hemocyanins are copper-containing oxygen carriers occurring freely dissolved in the hemolymph of many mollusks and arthropods. This is Hemocyanin D chain (HCD) from Aphonopelma sp. (American tarantula).